Consider the following 260-residue polypeptide: Adenosylcobinamide-GDP ribazoletransferase (260 aa).

The next 7 membrane-spanning stretches (helical) occupy residues 42 to 62, 64 to 84, 117 to 137, 144 to 164, 192 to 212, 214 to 234, and 240 to 260; these read PLAG…ANAI, LPPL…TGAL, FAAL…MAII, YALL…LAFW, GLGL…VALI, ALVL…AKIG, and TLGA…VMAL.

It belongs to the CobS family. Requires Mg(2+) as cofactor.

Its subcellular location is the cell inner membrane. The catalysed reaction is alpha-ribazole + adenosylcob(III)inamide-GDP = adenosylcob(III)alamin + GMP + H(+). The enzyme catalyses alpha-ribazole 5'-phosphate + adenosylcob(III)inamide-GDP = adenosylcob(III)alamin 5'-phosphate + GMP + H(+). The protein operates within cofactor biosynthesis; adenosylcobalamin biosynthesis; adenosylcobalamin from cob(II)yrinate a,c-diamide: step 7/7. Joins adenosylcobinamide-GDP and alpha-ribazole to generate adenosylcobalamin (Ado-cobalamin). Also synthesizes adenosylcobalamin 5'-phosphate from adenosylcobinamide-GDP and alpha-ribazole 5'-phosphate. In Brucella abortus (strain S19), this protein is Adenosylcobinamide-GDP ribazoletransferase.